A 163-amino-acid polypeptide reads, in one-letter code: UPF0763 protein CJJ81176_1011 (163 aa).

The protein belongs to the UPF0763 family.

This Campylobacter jejuni subsp. jejuni serotype O:23/36 (strain 81-176) protein is UPF0763 protein CJJ81176_1011.